Consider the following 271-residue polypeptide: Aminoglycoside N(3)-acetyltransferase III (271 aa).

The CoA site is built by histidine 31, alanine 32, serine 33, valine 34, and lysine 35. A 2-deoxystreptamine antibiotic is bound by residues tyrosine 64, aspartate 72, and glutamate 102. Residues serine 104, valine 105, and phenylalanine 109 each contribute to the CoA site. Residues glutamate 123, tyrosine 146, and aspartate 170 each coordinate a 2-deoxystreptamine antibiotic. Residues threonine 171 and threonine 173 each contribute to the CoA site. Residues histidine 176, threonine 212, glycine 213, and phenylalanine 221 each coordinate a 2-deoxystreptamine antibiotic.

Belongs to the antibiotic N-acetyltransferase family. As to quaternary structure, homodimer.

The catalysed reaction is a 2-deoxystreptamine antibiotic + acetyl-CoA = an N(3)-acetyl-2-deoxystreptamine antibiotic + CoA + H(+). Resistance to antibiotics containing the 2-deoxy-streptamine ring including dibekacin, gentamicin, kanamycin, sisomicin, tobramycin and neomycin, but not to amikacin or netilmicin. Acetylates a broad range of both 4,5- and 4,6-disubstituted aminoglycosides, including neomycin, paromomycin, ribostamycin, sisomicin, gentamicin, tobramycin and kanamycin, with no preference of one disubstitution over the other. Acetylates sisomicin and kanamycin most and least efficiently, respectively. Does not modify plazomicin. The sequence is that of Aminoglycoside N(3)-acetyltransferase III from Pseudomonas aeruginosa.